Reading from the N-terminus, the 342-residue chain is Arginase 1, mitochondrial (342 aa).

The N-terminal 22 residues, 1–22 (MSRIIGRKGINYIHRLNSASFT), are a transit peptide targeting the mitochondrion. L-ornithine is bound by residues serine 77 and 96 to 99 (GSTN). 4 residues coordinate Mn(2+): histidine 161, aspartate 185, histidine 187, and aspartate 189. 189 to 191 (DIY) serves as a coordination point for L-ornithine. 195–197 (EGN) contributes to the substrate binding site. L-ornithine is bound at residue serine 224. Mn(2+) is bound by residues aspartate 270 and aspartate 272. Glutamate 313 contacts substrate.

Belongs to the arginase family. Forms homohexamers. It depends on Mn(2+) as a cofactor. In terms of tissue distribution, expressed in vasculature of roots, root tips, cotyledons, leaves, cauline leaves, stems, sepals and pollen.

The protein resides in the mitochondrion. It catalyses the reaction L-arginine + H2O = urea + L-ornithine. The enzyme catalyses agmatine + H2O = urea + putrescine. Its pathway is nitrogen metabolism; urea cycle; L-ornithine and urea from L-arginine: step 1/1. It participates in amine and polyamine biosynthesis; putrescine biosynthesis via agmatine pathway; putrescine from agmatine: step 1/1. In terms of biological role, catalyzes the hydrolysis of L-arginine to urea and L-ornithine. The latter can be utilized in the urea cycle or as a precursor for the synthesis of both polyamines and proline. Possesses agmatinase activity. Catalyzes the formation of putrescine from agmatine. In Arabidopsis thaliana (Mouse-ear cress), this protein is Arginase 1, mitochondrial.